We begin with the raw amino-acid sequence, 79 residues long: Large ribosomal subunit protein uL24 (79 aa).

It belongs to the universal ribosomal protein uL24 family. Part of the 50S ribosomal subunit.

Its function is as follows. One of two assembly initiator proteins, it binds directly to the 5'-end of the 23S rRNA, where it nucleates assembly of the 50S subunit. One of the proteins that surrounds the polypeptide exit tunnel on the outside of the subunit. This Lactobacillus delbrueckii subsp. bulgaricus (strain ATCC 11842 / DSM 20081 / BCRC 10696 / JCM 1002 / NBRC 13953 / NCIMB 11778 / NCTC 12712 / WDCM 00102 / Lb 14) protein is Large ribosomal subunit protein uL24.